The primary structure comprises 237 residues: N-alpha-acetyltransferase 40 (237 aa).

Residue Gly2 is the site of N-myristoyl glycine attachment. One can recognise an N-acetyltransferase domain in the interval 63–216; sequence SGLEPATVDW…EDCSYEILSR (154 aa). Substrate-binding positions include Tyr85, 127 to 129, and Tyr138; that span reads DVE. Acetyl-CoA contacts are provided by residues 140–142 and 148–153; these read VQL and RKGLGK. Residue Thr174 participates in substrate binding. Asn179 is a binding site for acetyl-CoA. Positions 197 and 211 each coordinate substrate.

It belongs to the acetyltransferase family. NAA40 subfamily. As to expression, widely expressed; with the highest expression level in liver and the lowest expression in brain (at protein level).

The protein localises to the cytoplasm. The protein resides in the nucleus. The catalysed reaction is N-terminal L-seryl-[histone H4] + acetyl-CoA = N-terminal N(alpha)-acetyl-L-seryl-[histone H4] + CoA + H(+). It carries out the reaction N-terminal L-seryl-[histone H2A] + acetyl-CoA = N-terminal N(alpha)-acetyl-L-seryl-[histone H2A] + CoA + H(+). In terms of biological role, N-alpha-acetyltransferase that specifically mediates the acetylation of the N-terminal residues of histones H4 and H2A. In contrast to other N-alpha-acetyltransferase, has a very specific selectivity for histones H4 and H2A N-terminus and specifically recognizes the 'Ser-Gly-Arg-Gly sequence'. Acts as a negative regulator of apoptosis. May play a role in hepatic lipid metabolism. This is N-alpha-acetyltransferase 40 from Homo sapiens (Human).